Reading from the N-terminus, the 238-residue chain is Pyridoxine 5'-phosphate synthase (238 aa).

N6 is a 3-amino-2-oxopropyl phosphate binding site. 8 to 9 lines the 1-deoxy-D-xylulose 5-phosphate pocket; the sequence is DH. Residue R17 participates in 3-amino-2-oxopropyl phosphate binding. H42 (proton acceptor) is an active-site residue. Residues R44 and H49 each contribute to the 1-deoxy-D-xylulose 5-phosphate site. E69 serves as the catalytic Proton acceptor. T99 contacts 1-deoxy-D-xylulose 5-phosphate. H186 (proton donor) is an active-site residue. 3-amino-2-oxopropyl phosphate-binding positions include G187 and 208 to 209; that span reads GH.

The protein belongs to the PNP synthase family. As to quaternary structure, homooctamer; tetramer of dimers.

Its subcellular location is the cytoplasm. The enzyme catalyses 3-amino-2-oxopropyl phosphate + 1-deoxy-D-xylulose 5-phosphate = pyridoxine 5'-phosphate + phosphate + 2 H2O + H(+). The protein operates within cofactor biosynthesis; pyridoxine 5'-phosphate biosynthesis; pyridoxine 5'-phosphate from D-erythrose 4-phosphate: step 5/5. In terms of biological role, catalyzes the complicated ring closure reaction between the two acyclic compounds 1-deoxy-D-xylulose-5-phosphate (DXP) and 3-amino-2-oxopropyl phosphate (1-amino-acetone-3-phosphate or AAP) to form pyridoxine 5'-phosphate (PNP) and inorganic phosphate. The polypeptide is Pyridoxine 5'-phosphate synthase (Anaplasma marginale (strain St. Maries)).